We begin with the raw amino-acid sequence, 396 residues long: Elongation factor Tu (396 aa).

The region spanning 10 to 205 (KTHANIGTIG…AVDEYIPTPE (196 aa)) is the tr-type G domain. The tract at residues 19–26 (GHVDHGKT) is G1. Residue 19–26 (GHVDHGKT) participates in GTP binding. T26 contacts Mg(2+). Positions 61–65 (GITIS) are G2. Residues 82–85 (DCPG) are G3. Residues 82–86 (DCPGH) and 137–140 (NKCD) each bind GTP. Residues 137-140 (NKCD) form a G4 region. The tract at residues 175–177 (SAL) is G5.

Belongs to the TRAFAC class translation factor GTPase superfamily. Classic translation factor GTPase family. EF-Tu/EF-1A subfamily. As to quaternary structure, monomer.

The protein resides in the cytoplasm. It catalyses the reaction GTP + H2O = GDP + phosphate + H(+). Its function is as follows. GTP hydrolase that promotes the GTP-dependent binding of aminoacyl-tRNA to the A-site of ribosomes during protein biosynthesis. The chain is Elongation factor Tu from Shouchella clausii (strain KSM-K16) (Alkalihalobacillus clausii).